Here is a 286-residue protein sequence, read N- to C-terminus: MIEVTLLGTGSPIPDARRAGPSTLVRAGGQTFLVDCGRGVLQRAAAVGVGANQISALLLTHLHSDHIADLGDVLITRWVSNFAPDLPPLPIIGPPGTAEVVENMLKAFSFDIGYRIAHHDDLTTPPPVEVEEVTDGVVWGRDEVSIRVGPTDHRPVTPTIGFRIEHHGASVVLAGDTVPCRGLDKLAAGAGALVHTVIRRDLIEALPMQRIRDICDYHSSVEQAAETATRAGVGILILTHYVPTLQPGQEDDWRALAATRFDRQIEIGDDLHRVQVHPGVCAKPAG.

The Zn(2+) site is built by histidine 61, histidine 63, aspartate 65, histidine 66, histidine 153, aspartate 176, and histidine 240. The active-site Proton acceptor is aspartate 65.

It belongs to the RNase Z family. Homodimer. Zn(2+) is required as a cofactor.

The catalysed reaction is Endonucleolytic cleavage of RNA, removing extra 3' nucleotides from tRNA precursor, generating 3' termini of tRNAs. A 3'-hydroxy group is left at the tRNA terminus and a 5'-phosphoryl group is left at the trailer molecule.. Functionally, zinc phosphodiesterase, which displays some tRNA 3'-processing endonuclease activity. Probably involved in tRNA maturation, by removing a 3'-trailer from precursor tRNA. This chain is Ribonuclease Z, found in Mycolicibacterium gilvum (strain PYR-GCK) (Mycobacterium gilvum (strain PYR-GCK)).